The chain runs to 786 residues: Endonuclease MutS2 (786 aa).

335–342 (GPNTGGKT) provides a ligand contact to ATP. A Smr domain is found at 711–786 (LDLRGERFEN…GLGVTVVELK (76 aa)).

It belongs to the DNA mismatch repair MutS family. MutS2 subfamily. In terms of assembly, homodimer. Binds to stalled ribosomes, contacting rRNA.

Endonuclease that is involved in the suppression of homologous recombination and thus may have a key role in the control of bacterial genetic diversity. Functionally, acts as a ribosome collision sensor, splitting the ribosome into its 2 subunits. Detects stalled/collided 70S ribosomes which it binds and splits by an ATP-hydrolysis driven conformational change. Acts upstream of the ribosome quality control system (RQC), a ribosome-associated complex that mediates the extraction of incompletely synthesized nascent chains from stalled ribosomes and their subsequent degradation. Probably generates substrates for RQC. In Bacillus cytotoxicus (strain DSM 22905 / CIP 110041 / 391-98 / NVH 391-98), this protein is Endonuclease MutS2.